Here is a 127-residue protein sequence, read N- to C-terminus: Glycine cleavage system H protein (127 aa).

Residues 24-106 form the Lipoyl-binding domain; the sequence is TATLGISAFA…YGEGWLVKVQ (83 aa). N6-lipoyllysine is present on Lys65.

Belongs to the GcvH family. As to quaternary structure, the glycine cleavage system is composed of four proteins: P, T, L and H. Requires (R)-lipoate as cofactor.

The glycine cleavage system catalyzes the degradation of glycine. The H protein shuttles the methylamine group of glycine from the P protein to the T protein. The protein is Glycine cleavage system H protein of Thermosynechococcus vestitus (strain NIES-2133 / IAM M-273 / BP-1).